A 360-amino-acid polypeptide reads, in one-letter code: DNA polymerase IV (360 aa).

Positions 6–187 constitute a UmuC domain; sequence IIHVDMDAFY…LKIGDLHGVG (182 aa). Mg(2+) contacts are provided by aspartate 10 and aspartate 105. Glutamate 106 is a catalytic residue.

It belongs to the DNA polymerase type-Y family. Monomer. Mg(2+) serves as cofactor.

The protein resides in the cytoplasm. The enzyme catalyses DNA(n) + a 2'-deoxyribonucleoside 5'-triphosphate = DNA(n+1) + diphosphate. In terms of biological role, poorly processive, error-prone DNA polymerase involved in untargeted mutagenesis. Copies undamaged DNA at stalled replication forks, which arise in vivo from mismatched or misaligned primer ends. These misaligned primers can be extended by PolIV. Exhibits no 3'-5' exonuclease (proofreading) activity. May be involved in translesional synthesis, in conjunction with the beta clamp from PolIII. The chain is DNA polymerase IV from Exiguobacterium sibiricum (strain DSM 17290 / CCUG 55495 / CIP 109462 / JCM 13490 / 255-15).